The chain runs to 386 residues: Galactokinase (386 aa).

35 to 38 (EHTD) contributes to the substrate binding site. ATP is bound by residues Ser69 and 125–131 (GAGLSSS). Mg(2+)-binding residues include Ser131 and Glu163. The active-site Proton acceptor is Asp175. Substrate is bound at residue Tyr224.

This sequence belongs to the GHMP kinase family. GalK subfamily.

The protein localises to the cytoplasm. It carries out the reaction alpha-D-galactose + ATP = alpha-D-galactose 1-phosphate + ADP + H(+). It functions in the pathway carbohydrate metabolism; galactose metabolism. Functionally, catalyzes the transfer of the gamma-phosphate of ATP to D-galactose to form alpha-D-galactose-1-phosphate (Gal-1-P). This is Galactokinase from Vibrio vulnificus (strain YJ016).